The following is an 85-amino-acid chain: Arminin 6494 (85 aa).

A signal peptide spans 1–18 (MKTVFAILFLAFIALTYA). A propeptide spanning residues 19 to 57 (RSYEDVKEEIKNEVEKEILEDLEEESDELNDKRKEINDA) is cleaved from the precursor. Residue alanine 82 is modified to Alanine amide.

Belongs to the arminin family. As to expression, expressed in entodermal epithelium along the body column.

Its subcellular location is the secreted. It localises to the target cell membrane. In terms of biological role, antimicrobial peptide with a broad-spectrum antimicrobial activity. Keeps its antibacterial activity under a wide range of salt concentrations that mimic physiological conditions of human blood, which is surprising, since Hydra is an obligate freshwater animal with nearly no salt tolerance. Does not affect red blood cells. The chain is Arminin 6494 from Hydra vulgaris (Hydra).